The chain runs to 296 residues: Glycine N-acyltransferase (296 aa).

Position 16 is an N6-acetyllysine; alternate (Lys16). Lys16 is subject to N6-succinyllysine; alternate. An N6-acetyllysine modification is found at Lys113. 2 positions are modified to N6-acetyllysine; alternate: Lys127 and Lys142. Lys127 and Lys142 each carry N6-succinyllysine; alternate. Lys159 is subject to N6-acetyllysine. N6-succinyllysine is present on Lys169. N6-acetyllysine; alternate occurs at positions 183 and 256. Residues Lys183 and Lys256 each carry the N6-succinyllysine; alternate modification. An N6-succinyllysine modification is found at Lys267.

This sequence belongs to the glycine N-acyltransferase family.

It is found in the mitochondrion. The catalysed reaction is an acyl-CoA + glycine = an N-acylglycine + CoA + H(+). The enzyme catalyses benzoyl-CoA + glycine = N-benzoylglycine + CoA + H(+). Functionally, mitochondrial acyltransferase which transfers an acyl group to the N-terminus of glycine and glutamine, although much less efficiently. Can conjugate a multitude of substrates to form a variety of N-acylglycines, thereby detoxify xenobiotics, such as benzoic acid or salicylic acid, and endogenous organic acids, such as isovaleric acid. In Rattus norvegicus (Rat), this protein is Glycine N-acyltransferase (Glyat).